The sequence spans 267 residues: Indole-3-glycerol phosphate synthase (267 aa).

Belongs to the TrpC family.

It catalyses the reaction 1-(2-carboxyphenylamino)-1-deoxy-D-ribulose 5-phosphate + H(+) = (1S,2R)-1-C-(indol-3-yl)glycerol 3-phosphate + CO2 + H2O. Its pathway is amino-acid biosynthesis; L-tryptophan biosynthesis; L-tryptophan from chorismate: step 4/5. The protein is Indole-3-glycerol phosphate synthase of Cupriavidus pinatubonensis (strain JMP 134 / LMG 1197) (Cupriavidus necator (strain JMP 134)).